The sequence spans 692 residues: Elongation factor G (692 aa).

A tr-type G domain is found at 8-282 (AKTRNIGIMA…AVIDYLPSPL (275 aa)). Residues 17-24 (AHVDAGKT), 81-85 (DTPGH), and 135-138 (NKMD) contribute to the GTP site.

The protein belongs to the TRAFAC class translation factor GTPase superfamily. Classic translation factor GTPase family. EF-G/EF-2 subfamily.

The protein localises to the cytoplasm. Its function is as follows. Catalyzes the GTP-dependent ribosomal translocation step during translation elongation. During this step, the ribosome changes from the pre-translocational (PRE) to the post-translocational (POST) state as the newly formed A-site-bound peptidyl-tRNA and P-site-bound deacylated tRNA move to the P and E sites, respectively. Catalyzes the coordinated movement of the two tRNA molecules, the mRNA and conformational changes in the ribosome. This chain is Elongation factor G, found in Streptococcus uberis (strain ATCC BAA-854 / 0140J).